The sequence spans 131 residues: Small ribosomal subunit protein uS8c (131 aa).

Belongs to the universal ribosomal protein uS8 family. Part of the 30S ribosomal subunit.

It localises to the plastid. The protein localises to the chloroplast. Its function is as follows. One of the primary rRNA binding proteins, it binds directly to 16S rRNA central domain where it helps coordinate assembly of the platform of the 30S subunit. The sequence is that of Small ribosomal subunit protein uS8c (rps8) from Tupiella akineta (Green alga).